Reading from the N-terminus, the 221-residue chain is GTP cyclohydrolase-2 (221 aa).

Residue 63-67 coordinates GTP; the sequence is RLHSE. Residues Cys-68, Cys-79, and Cys-81 each contribute to the Zn(2+) site. Residues Gln-84, 107 to 109, and Thr-129 contribute to the GTP site; that span reads EGR. Asp-141 functions as the Proton acceptor in the catalytic mechanism. The active-site Nucleophile is Arg-143. 2 residues coordinate GTP: Ser-164 and Lys-169.

This sequence belongs to the GTP cyclohydrolase II family. Zn(2+) serves as cofactor.

It catalyses the reaction GTP + 4 H2O = 2,5-diamino-6-hydroxy-4-(5-phosphoribosylamino)-pyrimidine + formate + 2 phosphate + 3 H(+). It functions in the pathway cofactor biosynthesis; riboflavin biosynthesis; 5-amino-6-(D-ribitylamino)uracil from GTP: step 1/4. Catalyzes the conversion of GTP to 2,5-diamino-6-ribosylamino-4(3H)-pyrimidinone 5'-phosphate (DARP), formate and pyrophosphate. The protein is GTP cyclohydrolase-2 of Streptomyces coelicolor (strain ATCC BAA-471 / A3(2) / M145).